Reading from the N-terminus, the 171-residue chain is Lipoprotein signal peptidase (171 aa).

The next 3 helical transmembrane spans lie at 12–32 (WYWV…WVLA), 67–87 (WQRW…TVWL), and 93–113 (SLLK…GNLV). Catalysis depends on residues Asp-123 and Asp-141. A helical membrane pass occupies residues 137–157 (FNIADSAICIGAVLIIWDAFL).

Belongs to the peptidase A8 family.

Its subcellular location is the cell inner membrane. It catalyses the reaction Release of signal peptides from bacterial membrane prolipoproteins. Hydrolyzes -Xaa-Yaa-Zaa-|-(S,diacylglyceryl)Cys-, in which Xaa is hydrophobic (preferably Leu), and Yaa (Ala or Ser) and Zaa (Gly or Ala) have small, neutral side chains.. Its pathway is protein modification; lipoprotein biosynthesis (signal peptide cleavage). Its function is as follows. This protein specifically catalyzes the removal of signal peptides from prolipoproteins. The polypeptide is Lipoprotein signal peptidase (Shewanella baltica (strain OS195)).